The chain runs to 375 residues: Chaperone protein DnaJ (375 aa).

The J domain maps to 4 to 68; that stretch reads DYYEILGVSR…ETRARYDRFG (65 aa). The CR-type zinc-finger motif lies at 134–216; it reads GGEKEIRIRH…CGGSGRKQET (83 aa). The Zn(2+) site is built by Cys147, Cys150, Cys164, Cys167, Cys190, Cys193, Cys204, and Cys207. CXXCXGXG motif repeat units follow at residues 147–154, 164–171, 190–197, and 204–211; these read CQVCEGSG, CSTCSGSG, CPTCNGSG, and CEACGGSG.

It belongs to the DnaJ family. In terms of assembly, homodimer. Zn(2+) is required as a cofactor.

It is found in the cytoplasm. In terms of biological role, participates actively in the response to hyperosmotic and heat shock by preventing the aggregation of stress-denatured proteins and by disaggregating proteins, also in an autonomous, DnaK-independent fashion. Unfolded proteins bind initially to DnaJ; upon interaction with the DnaJ-bound protein, DnaK hydrolyzes its bound ATP, resulting in the formation of a stable complex. GrpE releases ADP from DnaK; ATP binding to DnaK triggers the release of the substrate protein, thus completing the reaction cycle. Several rounds of ATP-dependent interactions between DnaJ, DnaK and GrpE are required for fully efficient folding. Also involved, together with DnaK and GrpE, in the DNA replication of plasmids through activation of initiation proteins. This Gloeothece citriformis (strain PCC 7424) (Cyanothece sp. (strain PCC 7424)) protein is Chaperone protein DnaJ.